A 289-amino-acid chain; its full sequence is ATP synthase gamma chain (289 aa).

It belongs to the ATPase gamma chain family. As to quaternary structure, F-type ATPases have 2 components, CF(1) - the catalytic core - and CF(0) - the membrane proton channel. CF(1) has five subunits: alpha(3), beta(3), gamma(1), delta(1), epsilon(1). CF(0) has three main subunits: a, b and c.

The protein localises to the cell inner membrane. Produces ATP from ADP in the presence of a proton gradient across the membrane. The gamma chain is believed to be important in regulating ATPase activity and the flow of protons through the CF(0) complex. The protein is ATP synthase gamma chain of Dichelobacter nodosus (strain VCS1703A).